The sequence spans 586 residues: Terminase, large subunit (586 aa).

The interval 1–229 (MSTQSNRNAL…TIIWPALYPR (229 aa)) is ATPase activity. Residues 58-65 (AFRGIGKS) carry the Walker A motif motif. Residues 156 to 161 (IIIADD) carry the Walker B motif motif. The segment at 344–429 (HSYHSCSQNT…ESNFGDGMFG (86 aa)) is nuclease activity. Mg(2+) is bound by residues aspartate 364, glutamate 420, and aspartate 518. The interval 571–586 (LYWEDDDVNGDRFINW) is involved in prohead binding.

This sequence belongs to the Teseptimavirus large terminase family. Homopentamer. Interacts with the terminase small subunit; the active complex is probably heterooligomeric. Interacts with the portal protein. Mg(2+) serves as cofactor.

In terms of biological role, the terminase large subunit acts as an ATP driven molecular motor necessary for viral DNA translocation into empty capsids and as an endonuclease that cuts the viral genome at a unique and precise dsDNA sequence to initiate and to end a packaging reaction. The terminase lies at a unique vertex of the procapsid and is composed of two subunits, a small terminase subunit involved in viral DNA recognition (packaging sequence), and a large terminase subunit possessing endonucleolytic and ATPase activities. Both terminase subunits heterooligomerize and are docked on the portal protein to form the packaging machine. The terminase large subunit exhibits endonuclease activity and cleaves the viral genome concatemer. Once the DNA is packaged, the terminase detaches from the connector and gets replaced by the tail to finish maturation of the virion. In Escherichia coli (Bacteriophage T3), this protein is Terminase, large subunit (19).